Here is a 219-residue protein sequence, read N- to C-terminus: PKHD-type hydroxylase Mmar10_1675 (219 aa).

Positions 77 to 171 (TLSRILVSRY…RVAVVGWVRS (95 aa)) constitute a Fe2OG dioxygenase domain. His-95, Asp-97, and His-152 together coordinate Fe cation. Arg-162 contributes to the 2-oxoglutarate binding site.

It depends on Fe(2+) as a cofactor. The cofactor is L-ascorbate.

In Maricaulis maris (strain MCS10) (Caulobacter maris), this protein is PKHD-type hydroxylase Mmar10_1675.